Reading from the N-terminus, the 218-residue chain is Putative receptor like protein 25 (218 aa).

The Extracellular segment spans residues 1–178; sequence MIYTKNAYGS…QEDAKVLNWK (178 aa). LRR repeat units follow at residues 34–58, 59–82, 83–106, and 108–131; these read LTLYSAIDFSGNRLEGQIPESIGLL, KALIALNLSNNAFIGNIPMSMANL, IELESLDMSRNGLSGTIPQGLKTL, and FLGYINVSHNQLKGEIPQGTQITG. Residue asparagine 65 is glycosylated (N-linked (GlcNAc...) asparagine). The N-linked (GlcNAc...) asparagine glycan is linked to asparagine 113. A helical transmembrane segment spans residues 179-199; that stretch reads AVATGYGPGVFFGLAIAQIIA. The Cytoplasmic portion of the chain corresponds to 200–218; that stretch reads SYKPEWLVKIIGPNKRRNH.

Belongs to the RLP family.

It is found in the cell membrane. The sequence is that of Putative receptor like protein 25 from Arabidopsis thaliana (Mouse-ear cress).